We begin with the raw amino-acid sequence, 73 residues long: UPF0499 protein CHGG_06021 (73 aa).

The N-terminal stretch at 1–20 (MKSSIHVVLFFLLSLVASMA) is a signal peptide. 3 cysteine pairs are disulfide-bonded: cysteine 41–cysteine 55, cysteine 48–cysteine 60, and cysteine 54–cysteine 69.

Belongs to the UPF0499 family.

It localises to the secreted. The chain is UPF0499 protein CHGG_06021 from Chaetomium globosum (strain ATCC 6205 / CBS 148.51 / DSM 1962 / NBRC 6347 / NRRL 1970) (Soil fungus).